The following is a 207-amino-acid chain: Venom allergen 5 (207 aa).

Intrachain disulfides connect cysteine 4/cysteine 16, cysteine 8/cysteine 105, and cysteine 29/cysteine 97. An SCP domain is found at 49 to 192 (DEHNRFRQKV…MKSHYLVCNY (144 aa)). Tyrosine 111 bears the Phosphotyrosine mark. An N-linked (Glc) (glycation) lysine glycan is attached at lysine 141. A disulfide bond links cysteine 173 and cysteine 190.

This sequence belongs to the CRISP family. Venom allergen 5-like subfamily. In terms of processing, glycosylated. In terms of tissue distribution, expressed by the venom gland.

Its subcellular location is the secreted. The polypeptide is Venom allergen 5 (Polybia paulista (Neotropical social wasp)).